Consider the following 30-residue polypeptide: Fibrinogen (30 aa).

Homodimer. Secreted into the hemolymph.

The protein localises to the secreted. It localises to the extracellular space. In terms of biological role, clotting protein. This Panulirus interruptus (California spiny lobster) protein is Fibrinogen.